A 314-amino-acid polypeptide reads, in one-letter code: Dihydroorotate dehydrogenase (fumarate) (314 aa).

FMN is bound by residues Ala21 and Lys45–Ser46. Substrate-binding positions include Lys45, Asn69–Leu73, and Asn129. Asn129 provides a ligand contact to FMN. The Nucleophile role is filled by Cys132. Asn134 contributes to the substrate binding site. FMN is bound by residues Lys166 and Val195. Residue Asn196–Ser197 coordinates substrate. FMN is bound by residues Gly224, Gly251–Gly252, and Gly273–Thr274.

Belongs to the dihydroorotate dehydrogenase family. Type 1 subfamily. In terms of assembly, homodimer. FMN is required as a cofactor.

Its subcellular location is the cytoplasm. It carries out the reaction (S)-dihydroorotate + fumarate = orotate + succinate. The protein operates within pyrimidine metabolism; UMP biosynthesis via de novo pathway. Its function is as follows. Catalyzes the conversion of dihydroorotate to orotate with fumarate as the electron acceptor. Molecular oxygen can replace fumarate in vitro. In Trypanosoma cruzi (strain CL Brener), this protein is Dihydroorotate dehydrogenase (fumarate) (pyr4).